The following is a 500-amino-acid chain: Putative DNA recombinase (500 aa).

The Resolvase/invertase-type recombinase catalytic domain maps to 1 to 144 (MIAIYVRVST…SGRLQKMKKG (144 aa)). Residue S9 is the O-(5'-phospho-DNA)-serine intermediate of the active site. The segment at residues 152–288 (LYGYKFVKEK…QELLGQSKRK (137 aa)) is a DNA-binding region (recombinase). Residues 372-448 (KEAEQSNHLS…IQSKMKVLDD (77 aa)) adopt a coiled-coil conformation.

In the N-terminal section; belongs to the site-specific recombinase resolvase family.

Its function is as follows. Putative site-specific recombinase having a very important role in sporulation. It probably plays a role in the recombination of SpoIIIC and SpoIVCB to form sigma K factor. This Bacillus subtilis (strain 168) protein is Putative DNA recombinase (cisA).